Consider the following 208-residue polypeptide: Thymidylate kinase (208 aa).

10-17 (GLEGAGKS) is an ATP binding site.

Belongs to the thymidylate kinase family.

It catalyses the reaction dTMP + ATP = dTDP + ADP. Its function is as follows. Phosphorylation of dTMP to form dTDP in both de novo and salvage pathways of dTTP synthesis. The protein is Thymidylate kinase of Pseudoalteromonas translucida (strain TAC 125).